Reading from the N-terminus, the 73-residue chain is Translation initiation factor IF-1 (73 aa).

Residues 1 to 73 (MAKKQGAIEI…TRGRIVYRYK (73 aa)) form the S1-like domain.

This sequence belongs to the IF-1 family. In terms of assembly, component of the 30S ribosomal translation pre-initiation complex which assembles on the 30S ribosome in the order IF-2 and IF-3, IF-1 and N-formylmethionyl-tRNA(fMet); mRNA recruitment can occur at any time during PIC assembly.

The protein localises to the cytoplasm. Its function is as follows. One of the essential components for the initiation of protein synthesis. Stabilizes the binding of IF-2 and IF-3 on the 30S subunit to which N-formylmethionyl-tRNA(fMet) subsequently binds. Helps modulate mRNA selection, yielding the 30S pre-initiation complex (PIC). Upon addition of the 50S ribosomal subunit IF-1, IF-2 and IF-3 are released leaving the mature 70S translation initiation complex. The polypeptide is Translation initiation factor IF-1 (Streptomyces coelicolor (strain ATCC BAA-471 / A3(2) / M145)).